The following is an 859-amino-acid chain: Leucine--tRNA ligase (859 aa).

The 'HIGH' region signature appears at 42-52 (PYPSGRLHMGH). A 'KMSKS' region motif is present at residues 618 to 622 (KMSKS). Lys621 lines the ATP pocket.

Belongs to the class-I aminoacyl-tRNA synthetase family.

The protein localises to the cytoplasm. It carries out the reaction tRNA(Leu) + L-leucine + ATP = L-leucyl-tRNA(Leu) + AMP + diphosphate. The protein is Leucine--tRNA ligase of Shewanella pealeana (strain ATCC 700345 / ANG-SQ1).